A 195-amino-acid chain; its full sequence is MSQRSAAIARTTKETDISLKLNIDGEGNTNIDTGVGFADHMLTLMSFWAGFDLDLKCKGDLEIDSHHTLEDIALVLGQVLSEAMGDKKGINRIGFAKVPMDEALVEVVIDLSGRAYLVYDDDILPPIIAGDERDVWREFFKSLAFKAGMNLHIKFEYGRNGHHLLEGAFKALGLAFRNALSVERQGVSSTKGSLD.

Belongs to the imidazoleglycerol-phosphate dehydratase family.

The protein localises to the cytoplasm. The catalysed reaction is D-erythro-1-(imidazol-4-yl)glycerol 3-phosphate = 3-(imidazol-4-yl)-2-oxopropyl phosphate + H2O. It functions in the pathway amino-acid biosynthesis; L-histidine biosynthesis; L-histidine from 5-phospho-alpha-D-ribose 1-diphosphate: step 6/9. In Maridesulfovibrio salexigens (strain ATCC 14822 / DSM 2638 / NCIMB 8403 / VKM B-1763) (Desulfovibrio salexigens), this protein is Imidazoleglycerol-phosphate dehydratase.